Here is a 130-residue protein sequence, read N- to C-terminus: uncharacterized protein (130 aa).

A disordered region spans residues 23–130 (SHLRLLPTAN…GAHQLSSPSS (108 aa)). The span at 30-45 (TANSPSGSNQPTNPNR) shows a compositional bias: polar residues.

This is an uncharacterized protein from Homo sapiens (Human).